Consider the following 251-residue polypeptide: Imidazole glycerol phosphate synthase subunit HisF (251 aa).

Catalysis depends on residues Asp-11 and Asp-130.

It belongs to the HisA/HisF family. As to quaternary structure, heterodimer of HisH and HisF.

The protein localises to the cytoplasm. It carries out the reaction 5-[(5-phospho-1-deoxy-D-ribulos-1-ylimino)methylamino]-1-(5-phospho-beta-D-ribosyl)imidazole-4-carboxamide + L-glutamine = D-erythro-1-(imidazol-4-yl)glycerol 3-phosphate + 5-amino-1-(5-phospho-beta-D-ribosyl)imidazole-4-carboxamide + L-glutamate + H(+). It functions in the pathway amino-acid biosynthesis; L-histidine biosynthesis; L-histidine from 5-phospho-alpha-D-ribose 1-diphosphate: step 5/9. In terms of biological role, IGPS catalyzes the conversion of PRFAR and glutamine to IGP, AICAR and glutamate. The HisF subunit catalyzes the cyclization activity that produces IGP and AICAR from PRFAR using the ammonia provided by the HisH subunit. This Prosthecochloris aestuarii (strain DSM 271 / SK 413) protein is Imidazole glycerol phosphate synthase subunit HisF.